Consider the following 243-residue polypeptide: Linker for activation of T-cells family member 2 (243 aa).

The Extracellular portion of the chain corresponds to Met1–Thr5. Residues Glu6–Val26 traverse the membrane as a helical; Signal-anchor for type III membrane protein segment. S-palmitoyl cysteine attachment occurs at residues Cys25 and Cys28. Over Arg27–Ala243 the chain is Cytoplasmic. Ser44 is subject to Phosphoserine. Tyr58 carries the phosphotyrosine modification. A phosphoserine mark is found at Ser59 and Ser92. Tyr136, Tyr193, and Tyr233 each carry phosphotyrosine. Positions Pro174–Ala243 are disordered.

As to quaternary structure, when phosphorylated, interacts with GRB2. May also interact with SOS1, GAB1 and CBL. In terms of processing, phosphorylated on tyrosines following cross-linking of BCR in B-cells, FCGR1 in myeloid cells, or FCER1 in mast cells; which induces the recruitment of GRB2. Post-translationally, may be polyubiquitinated. As to expression, highly expressed in spleen, peripheral blood lymphocytes, and germinal centers of lymph nodes. Also expressed in placenta, lung, pancreas and small intestine. Present in B-cells, NK cells and monocytes. Absent from T-cells (at protein level).

It localises to the cell membrane. In terms of biological role, involved in FCER1 (high affinity immunoglobulin epsilon receptor)-mediated signaling in mast cells. May also be involved in BCR (B-cell antigen receptor)-mediated signaling in B-cells and FCGR1 (high affinity immunoglobulin gamma Fc receptor I)-mediated signaling in myeloid cells. Couples activation of these receptors and their associated kinases with distal intracellular events through the recruitment of GRB2. The protein is Linker for activation of T-cells family member 2 (LAT2) of Homo sapiens (Human).